Here is a 73-residue protein sequence, read N- to C-terminus: Translation initiation factor IF-1 (73 aa).

Residues 1-73 (MANKEELIEF…TKGRITYRAR (73 aa)) form the S1-like domain.

It belongs to the IF-1 family. Component of the 30S ribosomal translation pre-initiation complex which assembles on the 30S ribosome in the order IF-2 and IF-3, IF-1 and N-formylmethionyl-tRNA(fMet); mRNA recruitment can occur at any time during PIC assembly.

It is found in the cytoplasm. Functionally, one of the essential components for the initiation of protein synthesis. Stabilizes the binding of IF-2 and IF-3 on the 30S subunit to which N-formylmethionyl-tRNA(fMet) subsequently binds. Helps modulate mRNA selection, yielding the 30S pre-initiation complex (PIC). Upon addition of the 50S ribosomal subunit IF-1, IF-2 and IF-3 are released leaving the mature 70S translation initiation complex. The chain is Translation initiation factor IF-1 from Acinetobacter baumannii (strain ATCC 17978 / DSM 105126 / CIP 53.77 / LMG 1025 / NCDC KC755 / 5377).